A 147-amino-acid polypeptide reads, in one-letter code: Protein SPMIP3 (147 aa).

The chain is Protein SPMIP3 from Homo sapiens (Human).